We begin with the raw amino-acid sequence, 362 residues long: D-alanine--D-alanine ligase (362 aa).

In terms of domain architecture, ATP-grasp spans lysine 134–arginine 345. ATP is bound at residue glycine 170–glutamate 225. The Mg(2+) site is built by aspartate 298, glutamate 312, and asparagine 314.

The protein belongs to the D-alanine--D-alanine ligase family. The cofactor is Mg(2+). It depends on Mn(2+) as a cofactor.

The protein localises to the cytoplasm. The enzyme catalyses 2 D-alanine + ATP = D-alanyl-D-alanine + ADP + phosphate + H(+). The protein operates within cell wall biogenesis; peptidoglycan biosynthesis. In terms of biological role, cell wall formation. This Lactobacillus delbrueckii subsp. bulgaricus (strain ATCC BAA-365 / Lb-18) protein is D-alanine--D-alanine ligase.